The primary structure comprises 227 residues: Small ribosomal subunit protein uS5 (227 aa).

A disordered region spans residues 1 to 22 (MSKRSNRSNNKNNTNKFNIENW). The span at 7–18 (RSNNKNNTNKFN) shows a compositional bias: low complexity. In terms of domain architecture, S5 DRBM spans 63-126 (LEEEVMDVNL…DAAKYNLIKV (64 aa)).

This sequence belongs to the universal ribosomal protein uS5 family. In terms of assembly, part of the 30S ribosomal subunit. Contacts protein S4.

In terms of biological role, with S4 and S12 plays an important role in translational accuracy. This chain is Small ribosomal subunit protein uS5, found in Methanosphaera stadtmanae (strain ATCC 43021 / DSM 3091 / JCM 11832 / MCB-3).